The sequence spans 487 residues: Capsid protein (487 aa).

Residues 1-66 (MNQDTPLANL…VPPAGPSRSA (66 aa)) are disordered. A compositionally biased stretch (low complexity) spans 30–41 (NVAPPAQGAVQQ).

It is found in the virion. Functionally, the capsid protein self-assembles to form an icosahedral capsid with a T=2 symmetry made of 120 subunits. This is Capsid protein from Trifolium repens (Creeping white clover).